The sequence spans 766 residues: Ent-copalyl diphosphate synthase 3 (766 aa).

A chloroplast-targeting transit peptide spans 1-30 (FRSTAAGRCLPVTCCVFPRHFRVSSSSILP). Substrate is bound at residue Lys222. Mg(2+) contacts are provided by Asp354 and Asp356. The DXDD motif motif lies at 354–357 (DVDD). Residue Lys440 coordinates substrate.

Belongs to the terpene synthase family. Tpsc subfamily. The cofactor is Mg(2+). Accumulates in leaves, and, at low levels, in germinating seeds.

Its subcellular location is the plastid. It is found in the chloroplast. It carries out the reaction (2E,6E,10E)-geranylgeranyl diphosphate = ent-copalyl diphosphate. Its pathway is plant hormone biosynthesis; gibberellin biosynthesis. It participates in secondary metabolite biosynthesis; terpenoid biosynthesis. In terms of biological role, involved in the biosynthesis of ent-kaurene diterpenoids natural products such as oridonin, miltiradiene, eriocalyxin B and nezukol, known to exhibit antitumor, anti-inflammatory and antibacterial activities, and in the production of gibberellins phytohormones. Catalyzes the conversion of (2E,6E,10E)-geranylgeranyl diphosphate (GGPP) to ent-copalyl diphosphate (ent-CPP). This chain is Ent-copalyl diphosphate synthase 3, found in Isodon eriocalyx (Plectranthus eriocalyx).